Here is an 84-residue protein sequence, read N- to C-terminus: NADH-ubiquinone oxidoreductase chain 4L (84 aa).

The next 2 helical transmembrane spans lie at I19–I39 and I50–L70.

The protein belongs to the complex I subunit 4L family.

It localises to the mitochondrion membrane. It carries out the reaction a ubiquinone + NADH + 5 H(+)(in) = a ubiquinol + NAD(+) + 4 H(+)(out). Core subunit of the mitochondrial membrane respiratory chain NADH dehydrogenase (Complex I) that is believed to belong to the minimal assembly required for catalysis. Complex I functions in the transfer of electrons from NADH to the respiratory chain. The immediate electron acceptor for the enzyme is believed to be ubiquinone. The protein is NADH-ubiquinone oxidoreductase chain 4L (NAD4L) of Candida albicans (strain SC5314 / ATCC MYA-2876) (Yeast).